Consider the following 173-residue polypeptide: Crossover junction endodeoxyribonuclease RuvC (173 aa).

Residues Asp-8, Glu-67, and Asp-139 contribute to the active site. Mg(2+)-binding residues include Asp-8, Glu-67, and Asp-139.

The protein belongs to the RuvC family. Homodimer which binds Holliday junction (HJ) DNA. The HJ becomes 2-fold symmetrical on binding to RuvC with unstacked arms; it has a different conformation from HJ DNA in complex with RuvA. In the full resolvosome a probable DNA-RuvA(4)-RuvB(12)-RuvC(2) complex forms which resolves the HJ. Requires Mg(2+) as cofactor.

Its subcellular location is the cytoplasm. It catalyses the reaction Endonucleolytic cleavage at a junction such as a reciprocal single-stranded crossover between two homologous DNA duplexes (Holliday junction).. Its function is as follows. The RuvA-RuvB-RuvC complex processes Holliday junction (HJ) DNA during genetic recombination and DNA repair. Endonuclease that resolves HJ intermediates. Cleaves cruciform DNA by making single-stranded nicks across the HJ at symmetrical positions within the homologous arms, yielding a 5'-phosphate and a 3'-hydroxyl group; requires a central core of homology in the junction. The consensus cleavage sequence is 5'-(A/T)TT(C/G)-3'. Cleavage occurs on the 3'-side of the TT dinucleotide at the point of strand exchange. HJ branch migration catalyzed by RuvA-RuvB allows RuvC to scan DNA until it finds its consensus sequence, where it cleaves and resolves the cruciform DNA. The protein is Crossover junction endodeoxyribonuclease RuvC of Shewanella baltica (strain OS223).